A 367-amino-acid polypeptide reads, in one-letter code: Methylthioribose-1-phosphate isomerase (367 aa).

The active-site Proton donor is Asp-250.

It belongs to the eIF-2B alpha/beta/delta subunits family. MtnA subfamily.

It is found in the cytoplasm. The protein resides in the nucleus. It carries out the reaction 5-(methylsulfanyl)-alpha-D-ribose 1-phosphate = 5-(methylsulfanyl)-D-ribulose 1-phosphate. The protein operates within amino-acid biosynthesis; L-methionine biosynthesis via salvage pathway; L-methionine from S-methyl-5-thio-alpha-D-ribose 1-phosphate: step 1/6. Catalyzes the interconversion of methylthioribose-1-phosphate (MTR-1-P) into methylthioribulose-1-phosphate (MTRu-1-P). The chain is Methylthioribose-1-phosphate isomerase (IDI2) from Hordeum vulgare (Barley).